The primary structure comprises 242 residues: Pyridoxine 5'-phosphate synthase (242 aa).

Residue Asn6 participates in 3-amino-2-oxopropyl phosphate binding. Position 8 to 9 (8 to 9 (DH)) interacts with 1-deoxy-D-xylulose 5-phosphate. Residue Arg17 coordinates 3-amino-2-oxopropyl phosphate. His42 functions as the Proton acceptor in the catalytic mechanism. 1-deoxy-D-xylulose 5-phosphate contacts are provided by Arg44 and His49. Residue Glu69 is the Proton acceptor of the active site. 1-deoxy-D-xylulose 5-phosphate is bound at residue Thr99. The active-site Proton donor is the His190. 3-amino-2-oxopropyl phosphate is bound by residues Gly191 and 212–213 (GH).

Belongs to the PNP synthase family. In terms of assembly, homooctamer; tetramer of dimers.

It localises to the cytoplasm. The enzyme catalyses 3-amino-2-oxopropyl phosphate + 1-deoxy-D-xylulose 5-phosphate = pyridoxine 5'-phosphate + phosphate + 2 H2O + H(+). Its pathway is cofactor biosynthesis; pyridoxine 5'-phosphate biosynthesis; pyridoxine 5'-phosphate from D-erythrose 4-phosphate: step 5/5. Its function is as follows. Catalyzes the complicated ring closure reaction between the two acyclic compounds 1-deoxy-D-xylulose-5-phosphate (DXP) and 3-amino-2-oxopropyl phosphate (1-amino-acetone-3-phosphate or AAP) to form pyridoxine 5'-phosphate (PNP) and inorganic phosphate. In Neisseria meningitidis serogroup C, this protein is Pyridoxine 5'-phosphate synthase.